The sequence spans 625 residues: Probable potassium transport system protein Kup 2 (625 aa).

12 helical membrane passes run 15–35, 52–72, 98–118, 134–154, 164–184, 212–232, 246–266, 284–304, 336–356, 365–385, 394–414, and 417–437; these read LSFAALGVVFGDIGTSPLYAF, ILSLIFWSLIIIVSIKYLVIV, GGWLLFITLVGIGLIIGDGML, LSPNLAKYVLPVTLIILFFLF, IGVYFAPVMLVWFITIGILGF, FALFILGGVFLVMTGGEALFA, WFAVALPALLLCYFGQGAFVL, FLPVMIILATLATIIASQAII, VYLPLINFILALGTCSLVVIF, AYGIAVNLDMLITTVLVGIIA, FKILIFLLILIIELAFFAGNI, and LLTGGWIPILIAFLGFVVMYT.

The protein belongs to the HAK/KUP transporter (TC 2.A.72) family.

Its subcellular location is the cell inner membrane. It catalyses the reaction K(+)(in) + H(+)(in) = K(+)(out) + H(+)(out). Transport of potassium into the cell. Likely operates as a K(+):H(+) symporter. The polypeptide is Probable potassium transport system protein Kup 2 (Legionella pneumophila (strain Paris)).